The sequence spans 306 residues: UDP-3-O-acyl-N-acetylglucosamine deacetylase (306 aa).

Zn(2+) is bound by residues histidine 79, histidine 238, and aspartate 242. Catalysis depends on histidine 265, which acts as the Proton donor.

This sequence belongs to the LpxC family. Zn(2+) is required as a cofactor.

It carries out the reaction a UDP-3-O-[(3R)-3-hydroxyacyl]-N-acetyl-alpha-D-glucosamine + H2O = a UDP-3-O-[(3R)-3-hydroxyacyl]-alpha-D-glucosamine + acetate. It functions in the pathway glycolipid biosynthesis; lipid IV(A) biosynthesis; lipid IV(A) from (3R)-3-hydroxytetradecanoyl-[acyl-carrier-protein] and UDP-N-acetyl-alpha-D-glucosamine: step 2/6. Its function is as follows. Catalyzes the hydrolysis of UDP-3-O-myristoyl-N-acetylglucosamine to form UDP-3-O-myristoylglucosamine and acetate, the committed step in lipid A biosynthesis. The sequence is that of UDP-3-O-acyl-N-acetylglucosamine deacetylase from Hamiltonella defensa subsp. Acyrthosiphon pisum (strain 5AT).